The primary structure comprises 406 residues: Large ribosomal subunit protein uL4z (406 aa).

Residues 56 to 95 are disordered; the sequence is PYAVSKKAGHQTSAESWGTGRAVSRIPRVPGGGTHRAGQA.

It belongs to the universal ribosomal protein uL4 family.

The chain is Large ribosomal subunit protein uL4z (RPL4A) from Arabidopsis thaliana (Mouse-ear cress).